The sequence spans 2604 residues: BEACH domain-containing protein B (2604 aa).

One can recognise a BEACH-type PH domain in the interval 1761–1912 (VGTSEVLTSV…NAKEVGMLIV (152 aa)). One can recognise a BEACH domain in the interval 1936–2226 (DRRIAMEMAE…QIFRKKHPRR (291 aa)). WD repeat units follow at residues 2254 to 2293 (HSPSAVLYVGVVDSNIVLVNQGLTLSVKIWLTTQLHSGGN), 2368 to 2407 (HHKDVVSCVAVTADSTILATGSYDTTVMVWDILRMRTPEK), 2433 to 2474 (GHDD…RSLK), 2476 to 2515 (PSGSAVSKLAASHHGRIVLYGDDDLSLHLYSINGKHLASS), 2516 to 2557 (ESNG…KRYN), and 2558 to 2596 (GAGKIITSLTVTQEECFLAGTKDGALLVYSIENPQHRKP).

Its function is as follows. May be involved in the suppression of BCHC1 activity. The polypeptide is BEACH domain-containing protein B (Arabidopsis thaliana (Mouse-ear cress)).